The sequence spans 342 residues: Cyclin-dependent kinase-like 4 (342 aa).

In terms of domain architecture, Protein kinase spans 4 to 286 (YEKLAKIGEG…CAQLLDSAYF (283 aa)). ATP contacts are provided by residues 10–18 (IGEGSYGVV) and K33. Residues 45 to 51 (RKIALRE) carry the [NKR]KIAxRE motif. Residue D126 is the Proton acceptor of the active site. Residues 295–328 (KRKARSEGRSRRRQQNQLLPLIPGSHISPTPDGR) form a disordered region.

Belongs to the protein kinase superfamily. CMGC Ser/Thr protein kinase family. CDC2/CDKX subfamily.

The protein resides in the cytoplasm. It catalyses the reaction L-seryl-[protein] + ATP = O-phospho-L-seryl-[protein] + ADP + H(+). It carries out the reaction L-threonyl-[protein] + ATP = O-phospho-L-threonyl-[protein] + ADP + H(+). The protein is Cyclin-dependent kinase-like 4 (Cdkl4) of Mus musculus (Mouse).